A 291-amino-acid chain; its full sequence is Taste receptor type 2 member 16 (291 aa).

Position 1 (methionine 1) is a topological domain, extracellular. Residues 2–22 (IPIQLTVFFMIIYVLESLTII) traverse the membrane as a helical segment. The Cytoplasmic portion of the chain corresponds to 23–41 (VQSSLIVAVLGREWLQVRR). A helical membrane pass occupies residues 42-62 (LMPVDMILISLGISRFCLQWA). Over 63–84 (SMLNBFCSYFNLNYVLCNLTIT) the chain is Extracellular. Asparagine 80 carries an N-linked (GlcNAc...) asparagine glycan. A helical transmembrane segment spans residues 85–105 (WEFFNILTFWLNSLLTVFYCI). The Cytoplasmic portion of the chain corresponds to 106 to 125 (KVSSFTHHIFLWLRWRILRL). Residues 126-146 (FPWILLGSLMITCVTIIPSAI) form a helical membrane-spanning segment. The Extracellular segment spans residues 147-182 (GNYIQIQLLTMEHLPRNSTVTDKLEKFHQYEFQAHT). N-linked (GlcNAc...) asparagine glycosylation is present at asparagine 163. A helical transmembrane segment spans residues 183 to 203 (VALVIPFILFLASTILLMASL). Residues 204–228 (TKQIQHHSTGHCNPSMKAHFTALRS) are Cytoplasmic-facing. Residues 229–249 (LAVLFIVFTSYFLTILITIIG) form a helical membrane-spanning segment. The Extracellular segment spans residues 250–257 (TLFDRRCW). The helical transmembrane segment at 258–278 (LWVWEAFVYAFILMHSTSLML) threads the bilayer. The Cytoplasmic portion of the chain corresponds to 279-291 (SSPTLKRILKGKC).

Belongs to the G-protein coupled receptor T2R family. As to quaternary structure, interacts with RTP3 and RTP4.

It is found in the cell membrane. In terms of biological role, receptor that may play a role in the perception of bitterness and is gustducin-linked. May play a role in sensing the chemical composition of the gastrointestinal content. The activity of this receptor may stimulate alpha gustducin, mediate PLC-beta-2 activation and lead to the gating of TRPM5. This is Taste receptor type 2 member 16 (TAS2R16) from Gorilla gorilla gorilla (Western lowland gorilla).